The chain runs to 476 residues: ATP synthase subunit beta (476 aa).

Residue 152 to 159 participates in ATP binding; it reads GGAGVGKT.

The protein belongs to the ATPase alpha/beta chains family. In terms of assembly, F-type ATPases have 2 components, CF(1) - the catalytic core - and CF(0) - the membrane proton channel. CF(1) has five subunits: alpha(3), beta(3), gamma(1), delta(1), epsilon(1). CF(0) has three main subunits: a(1), b(2) and c(9-12). The alpha and beta chains form an alternating ring which encloses part of the gamma chain. CF(1) is attached to CF(0) by a central stalk formed by the gamma and epsilon chains, while a peripheral stalk is formed by the delta and b chains.

It is found in the cell inner membrane. It carries out the reaction ATP + H2O + 4 H(+)(in) = ADP + phosphate + 5 H(+)(out). Produces ATP from ADP in the presence of a proton gradient across the membrane. The catalytic sites are hosted primarily by the beta subunits. This is ATP synthase subunit beta from Granulibacter bethesdensis (strain ATCC BAA-1260 / CGDNIH1).